The chain runs to 359 residues: Protein disulfide-isomerase C17H9.14c (359 aa).

The first 19 residues, 1-19, serve as a signal peptide directing secretion; the sequence is MRLPLLSFVIFALFALVFA. 2 Thioredoxin domains span residues 20-130 and 134-250; these read SGVV…EKTG and RKIV…KKSG. Active-site nucleophile residues include cysteine 51 and cysteine 54. Disulfide bonds link cysteine 51–cysteine 54 and cysteine 170–cysteine 173.

Belongs to the protein disulfide isomerase family.

The enzyme catalyses Catalyzes the rearrangement of -S-S- bonds in proteins.. Functionally, participates in the folding of proteins containing disulfide bonds, may be involved in glycosylation, prolyl hydroxylation and triglyceride transfer. The chain is Protein disulfide-isomerase C17H9.14c from Schizosaccharomyces pombe (strain 972 / ATCC 24843) (Fission yeast).